The following is a 237-amino-acid chain: Golgi anti-apoptotic protein (237 aa).

At 1–37 (MAMPSLSACSSIEDDFNYGSSVASASVHIRMAFLRKV) the chain is on the cytoplasmic side. The helical transmembrane segment at 38–58 (YGILCLQFLLTTATTAVFLYF) threads the bilayer. Over 59 to 67 (DCMRTFIQG) the chain is Lumenal. Residues 68–88 (SPVLILASMFGSIGLIFALTL) traverse the membrane as a helical segment. At 89-94 (HRHKHP) the chain is on the cytoplasmic side. The helical transmembrane segment at 95–115 (LNLYLLCGFTLSESLTLASVV) threads the bilayer. Residue T116 is a topological domain, lumenal. A helical transmembrane segment spans residues 117-137 (FYDVHVVMQAFMLTTAAFLAL). Over 138–151 (TTYTLQSKRDFSKL) the chain is Cytoplasmic. Residues 152–172 (GAGLFAALWILILSGLLGIFV) traverse the membrane as a helical segment. At 173–174 (QN) the chain is on the lumenal side. Residues 175 to 195 (ETVKLVLSAFGALVFCGFIIY) form a helical membrane-spanning segment. At 196–209 (DTHSLIHKLSPEEY) the chain is on the cytoplasmic side. An intramembrane region (helical) is located at residues 210–230 (VLASINLYLDIINLFLHLLQL). Residues 231 to 237 (LEVSNKK) lie on the Cytoplasmic side of the membrane.

It belongs to the BI1 family. LFG subfamily.

It is found in the host Golgi apparatus membrane. Functionally, may affect virulence through inhibition of apoptosis. In Vaccinia virus (strain LC16m0) (VACV), this protein is Golgi anti-apoptotic protein (L6).